The chain runs to 508 residues: Photosystem II CP47 reaction center protein (508 aa).

A run of 6 helical transmembrane segments spans residues 21–36 (AVHL…WAGS), 101–115 (IVLS…IWHW), 140–156 (GIHL…FGAF), 203–218 (IAAG…FHLC), 237–252 (VLSS…AFVV), and 457–472 (CFAL…HGAR).

Belongs to the PsbB/PsbC family. PsbB subfamily. As to quaternary structure, PSII is composed of 1 copy each of membrane proteins PsbA, PsbB, PsbC, PsbD, PsbE, PsbF, PsbH, PsbI, PsbJ, PsbK, PsbL, PsbM, PsbT, PsbX, PsbY, PsbZ, Psb30/Ycf12, at least 3 peripheral proteins of the oxygen-evolving complex and a large number of cofactors. It forms dimeric complexes. The cofactor is Binds multiple chlorophylls. PSII binds additional chlorophylls, carotenoids and specific lipids..

It localises to the plastid. It is found in the chloroplast thylakoid membrane. In terms of biological role, one of the components of the core complex of photosystem II (PSII). It binds chlorophyll and helps catalyze the primary light-induced photochemical processes of PSII. PSII is a light-driven water:plastoquinone oxidoreductase, using light energy to abstract electrons from H(2)O, generating O(2) and a proton gradient subsequently used for ATP formation. This chain is Photosystem II CP47 reaction center protein, found in Chlorella vulgaris (Green alga).